The sequence spans 135 residues: ATP synthase epsilon chain (135 aa).

This sequence belongs to the ATPase epsilon chain family. As to quaternary structure, F-type ATPases have 2 components, CF(1) - the catalytic core - and CF(0) - the membrane proton channel. CF(1) has five subunits: alpha(3), beta(3), gamma(1), delta(1), epsilon(1). CF(0) has three main subunits: a, b and c.

Its subcellular location is the cell inner membrane. Produces ATP from ADP in the presence of a proton gradient across the membrane. The polypeptide is ATP synthase epsilon chain (Desulforapulum autotrophicum (strain ATCC 43914 / DSM 3382 / VKM B-1955 / HRM2) (Desulfobacterium autotrophicum)).